Reading from the N-terminus, the 341-residue chain is Major histocompatibility complex class I-related protein 1 (341 aa).

The first 22 residues, 1 to 22 (MGELMAFLLPLIIVLMVKHSDS), serve as a signal peptide directing secretion. The interval 23 to 109 (RTHSLRYFRL…KRLQRHYNHS (87 aa)) is alpha-1. The interval 23-201 (RTHSLRYFRL…EYGKDTLQRT (179 aa)) is antigen-binding cleft. Residues 23–302 (RTHSLRYFRL…QESETIPLVM (280 aa)) lie on the Extracellular side of the membrane. The 5-(2-oxoethylideneamino)-6-(D-ribitylamino)uracil site is built by arginine 31, serine 46, and lysine 65. Positions 31, 46, and 65 each coordinate 5-(2-oxopropylideneamino)-6-(D-ribitylamino)uracil. Arginine 31, serine 46, and lysine 65 together coordinate 7-hydroxy-6-methyl-8-(1-D-ribityl)lumazine. Arginine 31 serves as a coordination point for 8-(9H-purin-6-yl)-2-oxa-8-azabicyclo[3.3.1]nona-3,6-diene-4,6-dicarbaldehyde. Residues lysine 65 and histidine 80 each coordinate 8-(9H-purin-6-yl)-2-oxa-8-azabicyclo[3.3.1]nona-3,6-diene-4,6-dicarbaldehyde. Lysine 65 provides a ligand contact to 2-amino-4-oxopteridine-6-carbaldehyde. Lysine 65 contacts pyridoxal. Residue asparagine 107 is glycosylated (N-linked (GlcNAc...) asparagine). The tract at residues 110-201 (GSHTYQRMIG…EYGKDTLQRT (92 aa)) is alpha-2. Positions 116, 174, and 175 each coordinate 5-(2-oxoethylideneamino)-6-(D-ribitylamino)uracil. Arginine 116, tyrosine 174, and glutamine 175 together coordinate 5-(2-oxopropylideneamino)-6-(D-ribitylamino)uracil. The 7-hydroxy-6-methyl-8-(1-D-ribityl)lumazine site is built by arginine 116, tyrosine 174, and glutamine 175. Residue arginine 116 participates in 8-(9H-purin-6-yl)-2-oxa-8-azabicyclo[3.3.1]nona-3,6-diene-4,6-dicarbaldehyde binding. Intrachain disulfides connect cysteine 120/cysteine 183 and cysteine 222/cysteine 278. Residues 202–293 (EPPLVRVNRK…GVHMVLQVPQ (92 aa)) are alpha-3. An Ig-like C1-type domain is found at 203–299 (PPLVRVNRKE…QVPQESETIP (97 aa)). The interval 294–302 (ESETIPLVM) is connecting peptide. A helical transmembrane segment spans residues 303–323 (KAVSGSIVLVIVLAGVGVLVW). The Cytoplasmic portion of the chain corresponds to 324 to 341 (RRRPREQNGAIYLPTPDR).

Belongs to the MHC class I family. As to quaternary structure, heterotrimer that consists of MR1, B2M and a metabolite antigen. Major classes of metabolite ligands presented by MR1 include riboflavin-related antigens, pyrimidines and ribityl lumazines, nucleobase adducts and folate derivatives. Forms reversible covalent Schiff base complexes with microbial pyrimidine-based metabolite, which serves as a molecular switch triggering complete folding, stable association with B2M and translocation of the ternary complex from endoplasmic reticulum to the plasma membrane. Alternatively, forms non-Schiff base complexes with ribityl lumazines. On antigen-presenting cells, the ternary complex interacts with TCR on MR1-restricted T cells, predominantly represented by CD8-positive and CD4- and CD8-double negative MAIT cell subsets. Interacts with TAPBP and TAPBPL chaperones in the endoplasmic reticulum. TAPBP associated or not with MHC class I peptide loading complex binds ligand-free MR1 or MR1-B2M complex, providing for stable MR1 pools ready for metabolite antigen processing. TAPBPL interacts with MR1 in a ligand-independent way; this interaction may stabilize MR1 pool and facilitate ligand loading and dissociation. MR1-B2M heterodimer adopts a topology similar to classical MHC class I molecules, with alpha-1 and alpha-2 domains of MR1 forming the antigen-binding cleft composed of two alpha-helices resting on a floor of 7-stranded anti-parallel beta-pleated sheet. The ribityl moiety of pyrimidine-based antigens is recognized by Tyr-95 residue in the CDR3 alpha loop of the invariant TRAV1-2 TCR. Homodimerizes and does not associate with B2M. Post-translationally, N-glycosylated. As to expression, ubiquitous. Low expression is detected in peripheral blood B cells, T cells, monocytes and in bronchial epithelial cells (at protein level). Expressed in plasmablasts or plasma B cells in the lamina propria of ileum, appendix and colon (at protein level). Highly expressed on a subset of CD45-positive CD3-positive thymocytes (at protein level).

Its subcellular location is the cell membrane. The protein resides in the endoplasmic reticulum membrane. The protein localises to the golgi apparatus membrane. It is found in the early endosome membrane. It localises to the late endosome membrane. Its subcellular location is the secreted. Inhibited by pterin-based metabolites such as 6-formylpterin (6-FP, a product of folic acid photodegradation). 6-FP competitively inhibits MAIT cell activation by 5-OP-RU. Modulated by commonly prescribed anti-inflammatory drug metabolites. Inhibited by salicilates such as 3-formylsalicylic and 5-formylsalicylic acids. Activated by diclofenac and/or its hydroxy metabolites. In terms of biological role, antigen-presenting molecule specialized in displaying microbial pyrimidine-based metabolites to alpha-beta T cell receptors (TCR) on innate-type mucosal-associated invariant T (MAIT) cells. In complex with B2M preferentially presents riboflavin-derived metabolites to semi-invariant TRAV1.2 TCRs on MAIT cells, guiding immune surveillance of the microbial metabolome at mucosal epithelial barriers. Signature pyrimidine-based microbial antigens are generated via non-enzymatic condensation of metabolite intermediates of the riboflavin pathway with by-products arising from other metabolic pathways such as glycolysis. Typical potent antigenic metabolites are 5-(2-oxoethylideneamino)-6-D-ribitylaminouracil (5-OE-RU) and 5-(2-oxopropylideneamino)-6-D-ribitylaminouracil (5-OP-RU), products of condensation of 5-amino-6-D-ribityaminouracil (5-A-RU) with glyoxal or methylglyoxal by-products, respectively. May present microbial antigens to various TRAV1-2-negative MAIT cell subsets, providing for unique recognition of diverse microbes, including pathogens that do not synthesize riboflavin. Upon antigen recognition, elicits rapid innate-type MAIT cell activation to eliminate pathogenic microbes by directly killing infected cells. During T cell development, drives thymic selection and post-thymic terminal differentiation of MAIT cells in a process dependent on commensal microflora. Acts as an immune sensor of cancer cell metabolome. May present a tumor-specific or -associated metabolite essential for cancer cell survival to a 'pan-cancer' TCR consisting of TRAV38.2-DV8*TRAJ31 alpha chain paired with a TRBV25.1*TRBJ2.3 beta chain on a non-MAIT CD8-positive T cell clone (MC.7.G5), triggering T cell-mediated killing of a wide range of cancer cell types. Its function is as follows. Allele MR1*01: Presents microbial-derived metabolite 5-OP-RU to semi-invariant TRAV1.2-TRAJ33-TRBV6.1 (A-F7) TCR on MAIT cells. Presents nucleobase carbonyl adducts generated during oxidative stress. Captures M3Ade, a nucleobase adduct composed of one adenine modified by a malondialdehyde trimer, for recognition by MR1-restricted T cell clones expressing a polyclonal TCR repertoire. Displays moderate binding affinity toward tumor-enriched pyridoxal and pyridoxal 5'-phosphate antigens. Functionally, allele MR1*04: Presents tumor-enriched metabolite pyridoxal to pan-cancer 7.G5 TCR on T cells enabling preferential recognition of cancer cells. May act as an alloantigen. The polypeptide is Major histocompatibility complex class I-related protein 1 (Homo sapiens (Human)).